Reading from the N-terminus, the 326-residue chain is Vitamin B12 import system permease protein BtuC (326 aa).

Transmembrane regions (helical) follow at residues 15–35 (WLLSLSLLVLLATLLSLCAGE), 61–81 (LAVLLVGAALALSGAVMQALF), 88–108 (PGLLGVSNGAGVGLIAAVLLG), 112–132 (LPGWALGLCAIAGALIITLIL), 146–166 (LLAGVALGIICSALMTWAIYF), 184–204 (GGVDWQQSWLMIALIPVLIWI), 240–260 (GWMVGVSVAMAGAIGFIGLVI), 274–294 (VLLPGCALAGAIALLLADVVA), and 302–322 (ELPIGVVTATLGAPVFIWLLL).

It belongs to the binding-protein-dependent transport system permease family. FecCD subfamily. The complex is composed of two ATP-binding proteins (BtuD), two transmembrane proteins (BtuC) and a solute-binding protein (BtuF).

It is found in the cell inner membrane. Functionally, part of the ABC transporter complex BtuCDF involved in vitamin B12 import. Involved in the translocation of the substrate across the membrane. The sequence is that of Vitamin B12 import system permease protein BtuC from Salmonella agona (strain SL483).